A 136-amino-acid chain; its full sequence is UPF0213 protein ASA_0550 (136 aa).

Positions 17–92 (GQWSIYLVRT…KQQSKAFKER (76 aa)) constitute a GIY-YIG domain.

It belongs to the UPF0213 family.

In Aeromonas salmonicida (strain A449), this protein is UPF0213 protein ASA_0550.